Consider the following 448-residue polypeptide: Pentatricopeptide repeat-containing protein At1g80550, mitochondrial (448 aa).

The transit peptide at 1–21 (MLLLRRLNRVRIASPYSVRLL) directs the protein to the mitochondrion. PPR repeat units follow at residues 80 to 110 (TTET…MIGN), 116 to 146 (NHVT…LDDF), 150 to 186 (DETS…GFSV), 188 to 222 (NTKI…GVTK), 223 to 257 (DLFS…RMKL), 258 to 292 (DVVA…GCEP), 293 to 327 (NVAT…GCQP), 331 to 359 (TYMC…GVRP), 360 to 394 (KMDT…GDTP), and 395 to 429 (DSAA…GLSP).

The protein belongs to the PPR family. P subfamily.

It localises to the mitochondrion. This is Pentatricopeptide repeat-containing protein At1g80550, mitochondrial from Arabidopsis thaliana (Mouse-ear cress).